Reading from the N-terminus, the 1148-residue chain is Envelopment polyprotein (1148 aa).

The first 23 residues, 1 to 23, serve as a signal peptide directing secretion; that stretch reads MGKSSPVCLYLILQGLLLFDTVN. Over 24 to 496 the chain is Lumenal; that stretch reads AKNLNELKME…PGLHGWATVL (473 aa). Disulfide bonds link cysteine 34–cysteine 159, cysteine 68–cysteine 165, cysteine 117–cysteine 136, cysteine 141–cysteine 146, cysteine 183–cysteine 193, and cysteine 218–cysteine 257. Asparagine 142 is a glycosylation site (N-linked (GlcNAc...) asparagine; by host). N-linked (GlcNAc...) asparagine; by host glycosylation is present at asparagine 357. 4 disulfides stabilise this stretch: cysteine 386–cysteine 445, cysteine 390–cysteine 399, cysteine 415–cysteine 434, and cysteine 462–cysteine 485. A glycan (N-linked (GlcNAc...) asparagine; by host) is linked at asparagine 409. The chain crosses the membrane as a helical span at residues 497–517; that stretch reads LLLTFCFGWVLIPTITMILLK. At 518 to 637 the chain is on the cytoplasmic side; sequence ILIAFAYLCS…LSLFRYRSRF (120 aa). The segment at 526–543 is binding to the ribonucleoprotein; it reads CSKYNTDSKFRILVEKVK. 2 CCHC-type zinc fingers span residues 555 to 575 and 580 to 601; these read CEVC…RKSC and CPYC…FKVC. Binding to the ribonucleoprotein stretches follow at residues 598–615 and 621–635; these read FKVC…KKSL and MQGC…RYRS. In terms of domain architecture, ITAM spans 621-644; that stretch reads MQGCYRTLSLFRYRSRFFVGLVWC. The short motif at 625–628 is the YxxL element; the sequence is YRTL. A helical membrane pass occupies residues 638–658; that stretch reads FVGLVWCMLLVLELIVWAASA. Residues 659-1115 are Lumenal-facing; that stretch reads ETQNLNDGWT…WVLGVLNGNW (457 aa). 8 disulfides stabilise this stretch: cysteine 745/cysteine 780, cysteine 749/cysteine 787, cysteine 761/cysteine 894, cysteine 775/cysteine 905, cysteine 790/cysteine 913, cysteine 816/cysteine 825, cysteine 833/cysteine 842, and cysteine 873/cysteine 877. The segment at 767 to 787 is fusion loop; it reads YEYETGWGCNPPDCPGVGTGC. Asparagine 937 carries an N-linked (GlcNAc...) asparagine; by host glycan. 5 disulfides stabilise this stretch: cysteine 979/cysteine 1009, cysteine 1002/cysteine 1054, cysteine 1019/cysteine 1024, cysteine 1055/cysteine 1060, and cysteine 1094/cysteine 1098. A helical membrane pass occupies residues 1116–1136; that stretch reads MVVAVLIALLILSIFLFALCC. The segment at 1131-1148 is binding to the ribonucleoprotein; that stretch reads LFALCCPRRPSYKKDHKP. Over 1137-1148 the chain is Cytoplasmic; the sequence is PRRPSYKKDHKP.

It belongs to the hantavirus envelope glycoprotein family. In terms of assembly, homodimer. Homotetramer; forms heterotetrameric Gn-Gc spikes in the pre-fusion conformation. Interacts (via C-terminus) with the nucleoprotein. Interacts with host TUFM; this interaction contributes to the virus-induced degradation of mitochondria by autophagy, which leads to degradation of host MAVS and inhibition of type I interferon (IFN) responses. Interacts with host MAP1LC3B; this interaction contributes to the virus-induced degradation of mitochondria by autophagy, which leads to degradation of host MAVS and inhibition of type I interferon (IFN) responses. Homodimer. Homotetramer; forms heterotetrameric Gn-Gc spikes in the pre-fusion conformation. Homotrimer; forms homotrimer in the post-fusion conformation at acidic pH. Interacts (via C-terminus) with the nucleoprotein. Post-translationally, envelope polyprotein precursor is quickly cleaved in vivo just after synthesis, presumably by host signal peptidase.

The protein resides in the virion membrane. It is found in the host cell surface. The protein localises to the host Golgi apparatus membrane. Its subcellular location is the host endoplasmic reticulum membrane. It localises to the host mitochondrion. Forms homotetramers with glycoprotein C at the surface of the virion. Attaches the virion to host cell receptors including integrin ITGAV/ITGB3. This attachment induces virion internalization predominantly through clathrin-dependent endocytosis. Mediates the assembly and budding of infectious virus particles through its interaction with the nucleocapsid protein and the viral genome. May dysregulate normal immune and endothelial cell responses through an ITAM motif. Translocates to mitochondria, binds to host TUFM and recruits MAP1LC3B. These interactions induce mitochondrial autophagy and therefore destruction of host MAVS leading to inhibition of type I interferon (IFN) responses. Concomitant breakdown of glycoprotein N is apparently prevented by the nucleoprotein that may inhibit Gn-stimulated autophagosome-lysosome fusion. Interacts with the viral genomic RNA. In terms of biological role, forms heterooctamers with glycoprotein N at the surface of the virion. Attaches the virion to host cell receptors including integrin ITGAV/ITGB3. This attachment induces virion internalization predominantly through clathrin-dependent endocytosis. Class II fusion protein that promotes fusion of viral membrane with host endosomal membrane after endocytosis of the virion. This is Envelopment polyprotein (GP) from Homo sapiens (Human).